An 812-amino-acid chain; its full sequence is MGQLALQRLQPLASLPRRPPSLPPPSSATPSLPCATASRRPRFYVARAMSSHIVGYPRIGPKRELKFALESFWDGKTNVDDLQNVAANLRKSIWKHMAHAGIKYIPSNTFSYYDQMLDTTAMLGAVPSRYGWESGEIGFDVYFSMARGNASAHAMEMTKWFDTNYHYIVPELGPDVNFSYASHKAVVEFKEAKALGIDTVPVLIGPMTYLLLSKPAKGVEKSFCLLSLIDKILPVYKEVLADLKSAGARWIQFDEPILVMDLDTSQLQAFSDAYSHMESSLAGLNVLIATYFADVPAEAYKTLMSLKCVTGFGFDLVRGLETLDLIKMNFPRGKLLFAGVVDGRNIWANDLSASLKTLQTLEDIVGKEKVVVSTSCSLLHTAVDLVNEMKLDKELKSWLAFAAQKVVEVNALAKSFSGAKDEALFSSNSMRQASRRSSPRVTNAAVQQDVDAVKKSDHHRSTEVSVRLQAQQKKLNLPALPTTTIGSFPQTTDLRRIRREFKAKKISEVDYVQTIKEEYEKVIKLQEELGIDVLVHGEAERNDMVEFFGEQLSGFAFTSNGWVQSYGSRCVKPPIIYGDITRPKAMTVFWSSMAQKMTQRPMKGMLTGPVTILNWSFVRNDQPRHETCFQIALAIKDEVEDLEKAGVTVIQIDEAALREGLPLRKSEQKFYLDWAVHAFRITNSGVQDSTQIHTHMCYSNFNDIIHSIIDMDADVITIENSRSDEKLLSVFHEGVKYGAGIGPGVYDIHSPRIPSTEEIAERINKMLAVLDSKVLWVNPDCGLKTRNYSEVKSALSNMVAAAKLIRSQLNKS.

A chloroplast-targeting transit peptide spans 1 to 33 (MGQLALQRLQPLASLPRRPPSLPPPSSATPSLP). A disordered region spans residues 13-33 (ASLPRRPPSLPPPSSATPSLP). Residues 17–27 (RRPPSLPPPSS) are compositionally biased toward pro residues. 5-methyltetrahydropteroyltri-L-glutamate contacts are provided by Lys-66 and Asn-164. The disordered stretch occupies residues 430 to 456 (MRQASRRSSPRVTNAAVQQDVDAVKKS). L-homocysteine contacts are provided by residues 485 to 487 (IGS) and Glu-538. Residues 485–487 (IGS) and Glu-538 contribute to the L-methionine site. 5-methyltetrahydropteroyltri-L-glutamate is bound by residues Asp-543, Tyr-566, 569 to 570 (RC), and Trp-615. An L-homocysteine-binding site is contributed by Asp-653. An L-methionine-binding site is contributed by Asp-653. Positions 695, 697, 706, 710, and 719 each coordinate Zn(2+). His-749 serves as the catalytic Proton donor. Cys-781 contacts Zn(2+).

It belongs to the vitamin-B12 independent methionine synthase family. Zn(2+) serves as cofactor. As to expression, expressed in seeds.

The protein resides in the plastid. It localises to the chloroplast. The catalysed reaction is 5-methyltetrahydropteroyltri-L-glutamate + L-homocysteine = tetrahydropteroyltri-L-glutamate + L-methionine. The protein operates within amino-acid biosynthesis; L-methionine biosynthesis via de novo pathway; L-methionine from L-homocysteine (MetE route): step 1/1. Functionally, catalyzes the transfer of a methyl group from 5-methyltetrahydrofolate to homocysteine resulting in methionine formation. The sequence is that of 5-methyltetrahydropteroyltriglutamate--homocysteine methyltransferase 3, chloroplastic (MS3) from Arabidopsis thaliana (Mouse-ear cress).